Consider the following 205-residue polypeptide: MGRNPLIIGITGRIASGKDAASKIISNKYGFYEISADKLGHLVLHEKKEELVKIFGQKILNTRNEIDRLLIRNLVFNDNKELKKLESISHPIIFNKIKKILIQNQSTKIIINAALLFKINLEKLCDYIIVVKAKAPIIKNRLSYSMPSIDSNIINKILEIQKDIFFKKNIINLKIINIINNKNYAYLEKEIEKKMQEIINYERFE.

One can recognise a DPCK domain in the interval 7–205 (IIGITGRIAS…QEIINYERFE (199 aa)). 15-20 (ASGKDA) lines the ATP pocket.

This sequence belongs to the CoaE family.

It localises to the cytoplasm. It carries out the reaction 3'-dephospho-CoA + ATP = ADP + CoA + H(+). Its pathway is cofactor biosynthesis; coenzyme A biosynthesis; CoA from (R)-pantothenate: step 5/5. Functionally, catalyzes the phosphorylation of the 3'-hydroxyl group of dephosphocoenzyme A to form coenzyme A. This Borrelia garinii subsp. bavariensis (strain ATCC BAA-2496 / DSM 23469 / PBi) (Borreliella bavariensis) protein is Dephospho-CoA kinase.